A 357-amino-acid polypeptide reads, in one-letter code: DNA replication and repair protein RecF (357 aa).

Position 31-38 (31-38 (GQNGAGKT)) interacts with ATP.

Belongs to the RecF family.

The protein resides in the cytoplasm. The RecF protein is involved in DNA metabolism; it is required for DNA replication and normal SOS inducibility. RecF binds preferentially to single-stranded, linear DNA. It also seems to bind ATP. The sequence is that of DNA replication and repair protein RecF from Coxiella burnetii (strain CbuG_Q212) (Coxiella burnetii (strain Q212)).